Reading from the N-terminus, the 138-residue chain is Putative pre-16S rRNA nuclease (138 aa).

This sequence belongs to the YqgF nuclease family.

The protein localises to the cytoplasm. Could be a nuclease involved in processing of the 5'-end of pre-16S rRNA. This is Putative pre-16S rRNA nuclease from Klebsiella pneumoniae subsp. pneumoniae (strain ATCC 700721 / MGH 78578).